Reading from the N-terminus, the 1378-residue chain is Hybrid signal transduction histidine kinase H (1378 aa).

A coiled-coil region spans residues 212-242; the sequence is KEKFKKEELINDFKSRLETLENKIDQRVDER. The PAS domain maps to 243–314; the sequence is IETRFKYVLE…NNNNNNNNNN (72 aa). The segment at 294-337 is disordered; that stretch reads YQQHNNNNNNNNNNNNNNNNNNNNNSNNKSPIINSPNTTSPTNT. A compositionally biased stretch (low complexity) spans 298–337; the sequence is NNNNNNNNNNNNNNNNNNNNNSNNKSPIINSPNTTSPTNT. In terms of domain architecture, Histidine kinase spans 498–805; the sequence is TMSHEMRTPL…SFHFLVEVFF (308 aa). At His501 the chain carries Phosphohistidine; by autocatalysis. A compositionally biased stretch (low complexity) spans 663 to 696; sequence NNSNNSNNNHNHNNNNNNNNHLNCSGSFNNNGFN. Disordered stretches follow at residues 663–717, 905–924, and 1103–1213; these read NNSN…DKHC, TNNN…STTT, and NNSN…HPNP. Basic residues predominate over residues 697–714; that stretch reads HGHHHHHHHHHHHHHHHD. Composition is skewed to low complexity over residues 1103–1119 and 1136–1187; these read NNSN…SGSS and SPSL…NNNN. Polar residues predominate over residues 1188–1206; it reads LNHYNSDSILSSDLSPQQH. Residues 1244-1364 enclose the Response regulatory domain; the sequence is KIMVAEDSLV…ILAVELKRAW (121 aa). Asp1297 bears the 4-aspartylphosphate mark.

In terms of processing, activation probably requires transfer of a phosphate group between a histidine in the kinase core (transmitter) domain and an aspartate of the receiver domain.

It catalyses the reaction ATP + protein L-histidine = ADP + protein N-phospho-L-histidine.. In terms of biological role, acts as a receptor histidine kinase for a signal transduction pathway. This protein undergoes an ATP-dependent autophosphorylation at a conserved histidine residue in the kinase core, and a phosphoryl group is then transferred to a conserved aspartate residue in the receiver domain. The chain is Hybrid signal transduction histidine kinase H (dhkH) from Dictyostelium discoideum (Social amoeba).